The following is a 177-amino-acid chain: MSRIGKKPVVVPDGVDLKINGTVVTAKGKLGELTRQFHEAITFAQEGKEVNVAVSGTDKKSSSLWGLSRTLLDNMVVGVSQGFSKQLEIQGVGYRAAVKGRTLELSLGFSHPVNYELPNGLEATVEKNTLITVKGYDKEVLGQACAEIRSWRPPEPYKGKGVRYVGEFVLRKEGKKK.

It belongs to the universal ribosomal protein uL6 family. As to quaternary structure, part of the 50S ribosomal subunit.

Its function is as follows. This protein binds to the 23S rRNA, and is important in its secondary structure. It is located near the subunit interface in the base of the L7/L12 stalk, and near the tRNA binding site of the peptidyltransferase center. This Magnetococcus marinus (strain ATCC BAA-1437 / JCM 17883 / MC-1) protein is Large ribosomal subunit protein uL6.